A 660-amino-acid chain; its full sequence is E3 ubiquitin-protein ligase ORTHRUS 3 (660 aa).

A PHD-type zinc finger spans residues 12–63; it reads EGVCMRCKSMPPPEESLTCGTCVTPWHVSCLLSPPETLSATLQWLCPDCSGE. The disordered stretch occupies residues 107–129; sequence QLLSGKGVVDEDDEEEKKKTSKG. The RING-type 1 zinc finger occupies 141 to 197; that stretch reads CSFCMQSLQKPVSVRVLFALALMLVWFLESTPCGHNACLKCFLKWMGQGHRSCGTCR. Residues 285 to 434 enclose the YDG domain; that stretch reads VRNQGLLVGE…CRFLFVRCDN (150 aa). Residues 528–585 form an RING-type 2 zinc finger; that stretch reads CQICQKVMTNPVTTPCAHNFCKACLESKFAGTALVRERGSGGRKLRSQKSVMKCPCCP. The stretch at 593–622 forms a coiled coil; it reads QNPQVNREVAEVIEKLKKQEEEENAKSLDE. Basic and acidic residues-rich tracts occupy residues 610-621 and 637-646; these read KQEEEENAKSLD and QPKKRIKLDT. A disordered region spans residues 610–660; sequence KQEEEENAKSLDEGQCSGTSHEEEDDEQPKKRIKLDTDAEVSATVVESDMK.

The protein localises to the nucleus. It carries out the reaction S-ubiquitinyl-[E2 ubiquitin-conjugating enzyme]-L-cysteine + [acceptor protein]-L-lysine = [E2 ubiquitin-conjugating enzyme]-L-cysteine + N(6)-ubiquitinyl-[acceptor protein]-L-lysine.. Its pathway is protein modification; protein ubiquitination. Its function is as follows. E3 ubiquitin-protein ligase. May participate in CpG methylation-dependent transcriptional regulation. This chain is E3 ubiquitin-protein ligase ORTHRUS 3 (ORTH3), found in Arabidopsis thaliana (Mouse-ear cress).